The primary structure comprises 381 residues: Probable serine/threonine-protein kinase PBL22 (381 aa).

A lipid anchor (S-palmitoyl cysteine) is attached at C3. Position 64 is a phosphothreonine (T64). The region spanning 75-351 (FREGNIIGKG…GDVVVAFEYI (277 aa)) is the Protein kinase domain. ATP-binding positions include 81 to 89 (IGKGGFGSV) and K103. At Y148 the chain carries Phosphotyrosine. Catalysis depends on D201, which acts as the Proton acceptor. S235 carries the phosphoserine modification. Phosphothreonine is present on residues T236 and T241. Y249 carries the post-translational modification Phosphotyrosine. The tract at residues 361 to 381 (RRTARKSTDSNRLRRETKQSY) is disordered.

It belongs to the protein kinase superfamily. Ser/Thr protein kinase family. Post-translationally, palmitoylation at Cys-3 and Cys-6 are required for plasma membrane location.

It localises to the cell membrane. It catalyses the reaction L-seryl-[protein] + ATP = O-phospho-L-seryl-[protein] + ADP + H(+). It carries out the reaction L-threonyl-[protein] + ATP = O-phospho-L-threonyl-[protein] + ADP + H(+). Functionally, may be involved in plant defense signaling. This Arabidopsis thaliana (Mouse-ear cress) protein is Probable serine/threonine-protein kinase PBL22.